Consider the following 248-residue polypeptide: Lysine-rich arabinogalactan protein 19 (248 aa).

Positions 1–24 (MESNSIIWSLLLASALISSFSVNA) are cleaved as a signal peptide. Low complexity predominate over residues 25-37 (QGPAASPVTSTTT). The segment at 25-221 (QGPAASPVTS…APSPNTNGGN (197 aa)) is disordered. Composition is skewed to pro residues over residues 38-57 (APPPTTAAPPTTAAPPPTTT), 67-86 (PASPVTPPPAVTPTSPPAPK), and 94-171 (ATPP…PAPA). Residues 173–187 (TKHKRKHKHKRHHHA) show a composition bias toward basic residues. Positions 189–203 (APAPIPPSPPSPPVL) are enriched in pro residues. S196 carries the GPI-anchor amidated serine lipid modification. Residues 197–248 (PPSPPVLTDPQDTAPAPSPNTNGGNALNQLKGRAVMWLNTGLVILFLLAMTA) constitute a propeptide, removed in mature form.

Belongs to the lysine-rich AGP family. O-glycosylated on the hydroxyproline residues. In terms of tissue distribution, strongly expressed in stems, moderately expressed in flowers and roots and weakly expressed in young leaves.

Its subcellular location is the cell membrane. Functionally, proteoglycan that seems to be implicated in diverse developmental roles such as differentiation, cell-cell recognition, embryogenesis and programmed cell death. The protein is Lysine-rich arabinogalactan protein 19 (AGP19) of Arabidopsis thaliana (Mouse-ear cress).